Here is a 231-residue protein sequence, read N- to C-terminus: Pathogenesis-related thaumatin-like protein 3.7 (231 aa).

Positions 1–27 (MATVSDLALLLVAGLVAISLHMQEAGA) are cleaved as a signal peptide. 8 disulfides stabilise this stretch: Cys36/Cys230, Cys77/Cys87, Cys92/Cys98, Cys143/Cys218, Cys148/Cys201, Cys156/Cys166, Cys170/Cys179, and Cys180/Cys188.

This sequence belongs to the thaumatin family.

In terms of biological role, may be involved in disease resistance. The sequence is that of Pathogenesis-related thaumatin-like protein 3.7 from Cryptomeria japonica (Japanese cedar).